The chain runs to 347 residues: Phenylalanine--tRNA ligase alpha subunit (347 aa).

Glutamate 265 lines the Mg(2+) pocket.

The protein belongs to the class-II aminoacyl-tRNA synthetase family. Phe-tRNA synthetase alpha subunit type 1 subfamily. As to quaternary structure, tetramer of two alpha and two beta subunits. It depends on Mg(2+) as a cofactor.

The protein localises to the cytoplasm. It carries out the reaction tRNA(Phe) + L-phenylalanine + ATP = L-phenylalanyl-tRNA(Phe) + AMP + diphosphate + H(+). In Mycolicibacterium paratuberculosis (strain ATCC BAA-968 / K-10) (Mycobacterium paratuberculosis), this protein is Phenylalanine--tRNA ligase alpha subunit.